We begin with the raw amino-acid sequence, 84 residues long: Small ribosomal subunit protein bS16 (84 aa).

It belongs to the bacterial ribosomal protein bS16 family.

This is Small ribosomal subunit protein bS16 from Burkholderia mallei (strain NCTC 10247).